A 988-amino-acid polypeptide reads, in one-letter code: Transposase for transposon Tn501 (988 aa).

The protein belongs to the transposase 7 family.

Required for transposition of transposon Tn501. The polypeptide is Transposase for transposon Tn501 (tnpA) (Pseudomonas aeruginosa).